Consider the following 262-residue polypeptide: LysM and putative peptidoglycan-binding domain-containing protein 3 (262 aa).

Residues 1–218 (MSGRIPNHGY…PYHGADWSLG (218 aa)) lie on the Extracellular side of the membrane. One can recognise a LysM domain in the interval 70 to 114 (ISRDICEGDTLNSIALQYCCTVADLKRANNFLNEQDFFALRTIKI). The chain crosses the membrane as a helical span at residues 219–239 (WWTAVAIMVFVGIITPLFYFL). Topologically, residues 240-262 (YYEVLMKVNTSHTLNSIEKSGPS) are cytoplasmic.

It localises to the cell membrane. Its subcellular location is the golgi apparatus. In terms of biological role, essential for Golgi structural integrity. This is LysM and putative peptidoglycan-binding domain-containing protein 3 (lysmd3) from Xenopus tropicalis (Western clawed frog).